The chain runs to 1049 residues: Cilia- and flagella-associated protein 337 (1049 aa).

In terms of domain architecture, EF-hand spans 81-116 (GTKEEYGELFDKVDVAQDGFINWDKLTSFILLELYE). WD repeat units follow at residues 138–177 (KHKD…QETF), 358–397 (NIAQ…KPVG), 401–440 (GHSA…SIQR), 487–528 (SHEK…KQFT), 531–570 (HGNA…HHTL), and 633–671 (QHHD…AHHV). The disordered stretch occupies residues 691 to 712 (LLSAGRSQPSHPMADHSTTGVR). Residues 695–711 (GRSQPSHPMADHSTTGV) are compositionally biased toward polar residues. WD repeat units follow at residues 719–766 (EGKN…LLAE), 769–809 (AHSG…LNSS), and 825–866 (PHED…VWIF).

It belongs to the CFAP337 family. As to quaternary structure, associates with components of the nexin-dynein regulatory complex (N-DRC) and the CFAP184:CFAP263 complex.

It localises to the cell projection. The protein resides in the cilium. Functionally, associates with components of the nexin-dynein regulatory complex (N-DRC), a key regulator of ciliary/flagellar motility, and might act as an inner dynein arm (IDA) hub or linkage. The polypeptide is Cilia- and flagella-associated protein 337 (Homo sapiens (Human)).